A 514-amino-acid polypeptide reads, in one-letter code: Na(+)/H(+) antiporter NhaB (514 aa).

12 helical membrane-spanning segments follow: residues 23–43, 63–83, 97–117, 120–140, 144–164, 202–222, 238–258, 303–323, 357–377, 391–411, 447–467, and 475–495; these read LALL…PFVA, PLLP…TSAA, LLLM…LFIF, LLLS…AAAF, FLDA…FYGI, LMMH…VGEP, FFLR…LTCM, AVIG…VGLI, LTVF…APII, LFYL…VGTI, ATPN…APLI, and VWMA…CVEF.

Belongs to the NhaB Na(+)/H(+) (TC 2.A.34) antiporter family.

Its subcellular location is the cell inner membrane. The catalysed reaction is 2 Na(+)(in) + 3 H(+)(out) = 2 Na(+)(out) + 3 H(+)(in). Functionally, na(+)/H(+) antiporter that extrudes sodium in exchange for external protons. This Salmonella agona (strain SL483) protein is Na(+)/H(+) antiporter NhaB.